A 328-amino-acid polypeptide reads, in one-letter code: Ankyrin repeat domain-containing protein 2 (328 aa).

Phosphoserine is present on Ser36. Ser68 is subject to Phosphoserine; by PKB/AKT2. The disordered stretch occupies residues 96–116 (RDALAAAQEPPPEPEEITGPV). ANK repeat units lie at residues 116-145 (VNEE…SADT), 149-178 (FRRT…TVDF), 182-211 (LDCT…DTNV), 215-244 (LLST…DINA), and 248-277 (EGDS…DMMA). Residues 297-328 (RHALEHPEPESEQNGLERPGSGRETPQPIPAQ) form a disordered region.

In terms of assembly, interacts with ID3; both proteins cooperate in myoblast differentiation. Interacts with TTN/titin. Interacts (via ANK repeats) with TCAP; the interaction is direct. Interacts with TJP1 (via PDZ domains). Interacts with PML; the interaction is direct. Interacts with p53/TP53. Interacts with YBX1. Interacts with AKT2. Post-translationally, phosphorylation at Ser-68 by PKB/AKT2 in response to oxidative stress induces translocation to the nucleus and negatively regulates myoblast differentiation. In terms of tissue distribution, expressed by myoblasts (at protein level). Expressed in skeletal and cardiac muscles.

Its subcellular location is the cytoplasm. It localises to the myofibril. The protein resides in the sarcomere. The protein localises to the i band. It is found in the cytosol. Its subcellular location is the nucleus. It localises to the PML body. Functions as a negative regulator of myocyte differentiation. May interact with both sarcoplasmic structural proteins and nuclear proteins to regulate gene expression during muscle development and in response to muscle stress. The sequence is that of Ankyrin repeat domain-containing protein 2 (Ankrd2) from Mus musculus (Mouse).